The sequence spans 197 residues: 3-isopropylmalate dehydratase small subunit (197 aa).

The protein belongs to the LeuD family. LeuD type 1 subfamily. In terms of assembly, heterodimer of LeuC and LeuD.

The catalysed reaction is (2R,3S)-3-isopropylmalate = (2S)-2-isopropylmalate. It functions in the pathway amino-acid biosynthesis; L-leucine biosynthesis; L-leucine from 3-methyl-2-oxobutanoate: step 2/4. Functionally, catalyzes the isomerization between 2-isopropylmalate and 3-isopropylmalate, via the formation of 2-isopropylmaleate. The protein is 3-isopropylmalate dehydratase small subunit (leuD) of Streptomyces coelicolor (strain ATCC BAA-471 / A3(2) / M145).